Reading from the N-terminus, the 38-residue chain is Photosystem I reaction center subunit VIII (38 aa).

Residues 12-32 form a helical membrane-spanning segment; that stretch reads WILIPIIGWLMPAVVMGLLFL.

Belongs to the PsaI family.

It localises to the cellular thylakoid membrane. May help in the organization of the PsaL subunit. This chain is Photosystem I reaction center subunit VIII, found in Gloeothece citriformis (strain PCC 7424) (Cyanothece sp. (strain PCC 7424)).